Here is a 549-residue protein sequence, read N- to C-terminus: Eukaryotic translation initiation factor 3 subunit D (549 aa).

The tract at residues 101–130 (QSYQRGRARGQRGRGARGARTPGGMTTLNK) is disordered. Positions 106-117 (GRARGQRGRGAR) are enriched in basic residues. The tract at residues 277–291 (EFDLLTVNETSVEPP) is RNA gate. The tract at residues 521 to 549 (ESDASEESGDEQADTPFAPLYSYGNSKRV) is disordered. Residues 523-533 (DASEESGDEQA) show a composition bias toward acidic residues.

This sequence belongs to the eIF-3 subunit D family. As to quaternary structure, component of the eukaryotic translation initiation factor 3 (eIF-3) complex.

The protein localises to the cytoplasm. Its function is as follows. mRNA cap-binding component of the eukaryotic translation initiation factor 3 (eIF-3) complex, which is involved in protein synthesis of a specialized repertoire of mRNAs and, together with other initiation factors, stimulates binding of mRNA and methionyl-tRNAi to the 40S ribosome. The eIF-3 complex specifically targets and initiates translation of a subset of mRNAs involved in cell proliferation. In the eIF-3 complex, eif3d specifically recognizes and binds the 7-methylguanosine cap of a subset of mRNAs. This is Eukaryotic translation initiation factor 3 subunit D from Bombyx mori (Silk moth).